The following is a 374-amino-acid chain: DNA replication and repair protein RecF (374 aa).

30–37 serves as a coordination point for ATP; sequence GENAQGKT.

This sequence belongs to the RecF family.

The protein localises to the cytoplasm. The RecF protein is involved in DNA metabolism; it is required for DNA replication and normal SOS inducibility. RecF binds preferentially to single-stranded, linear DNA. It also seems to bind ATP. This is DNA replication and repair protein RecF from Geobacillus sp. (strain WCH70).